We begin with the raw amino-acid sequence, 487 residues long: Cytochrome P450 716A75 (487 aa).

Residues 5–25 form a helical membrane-spanning segment; the sequence is FVSLLSLFLLILLPLSLLFLF. C434 contacts heme.

Belongs to the cytochrome P450 family. It depends on heme as a cofactor.

It localises to the membrane. The enzyme catalyses beta-amyrin + reduced [NADPH--hemoprotein reductase] + O2 = erythrodiol + oxidized [NADPH--hemoprotein reductase] + H2O + H(+). The catalysed reaction is erythrodiol + reduced [NADPH--hemoprotein reductase] + O2 = oleanolic aldehyde + oxidized [NADPH--hemoprotein reductase] + 2 H2O + H(+). It catalyses the reaction oleanolic aldehyde + reduced [NADPH--hemoprotein reductase] + O2 = oleanolate + oxidized [NADPH--hemoprotein reductase] + H2O + 2 H(+). Its function is as follows. Catalyzes the C-28 oxidation of beta-amyrin to form erythrodiol. Catalyzes the C-28 oxidation of erythrodiol to form oleanolic aldehyde. Catalyzes the C-28 oxidation of oleanolic aldehyde to form oleanolate. The polypeptide is Cytochrome P450 716A75 (Maesa lanceolata (False assegai)).